The following is a 309-amino-acid chain: Probable L,D-transpeptidase ErfK/SrfK (309 aa).

A signal peptide spans 1–21 (MRRITPFFPFFVLLVSHFSLA). The L,D-TPase catalytic domain maps to 96–231 (EGIVVNVAEM…VPVGTRVQII (136 aa)). His-191 (proton donor/acceptor) is an active-site residue. Cys-207 (nucleophile) is an active-site residue.

It belongs to the YkuD family.

It localises to the periplasm. It functions in the pathway cell wall biogenesis; peptidoglycan biosynthesis. The polypeptide is Probable L,D-transpeptidase ErfK/SrfK (erfK) (Salmonella typhimurium (strain LT2 / SGSC1412 / ATCC 700720)).